A 316-amino-acid chain; its full sequence is Ribosomal RNA large subunit methyltransferase F (316 aa).

It belongs to the methyltransferase superfamily. METTL16/RlmF family.

The protein resides in the cytoplasm. The enzyme catalyses adenosine(1618) in 23S rRNA + S-adenosyl-L-methionine = N(6)-methyladenosine(1618) in 23S rRNA + S-adenosyl-L-homocysteine + H(+). Functionally, specifically methylates the adenine in position 1618 of 23S rRNA. This Pseudomonas entomophila (strain L48) protein is Ribosomal RNA large subunit methyltransferase F.